A 352-amino-acid chain; its full sequence is Uroporphyrinogen decarboxylase (352 aa).

Substrate is bound by residues 26-30 (RQAGR), Asp76, Tyr153, Ser208, and His323.

It belongs to the uroporphyrinogen decarboxylase family. In terms of assembly, homodimer.

Its subcellular location is the cytoplasm. It carries out the reaction uroporphyrinogen III + 4 H(+) = coproporphyrinogen III + 4 CO2. It functions in the pathway porphyrin-containing compound metabolism; protoporphyrin-IX biosynthesis; coproporphyrinogen-III from 5-aminolevulinate: step 4/4. Catalyzes the decarboxylation of four acetate groups of uroporphyrinogen-III to yield coproporphyrinogen-III. The sequence is that of Uroporphyrinogen decarboxylase from Prochlorococcus marinus (strain MIT 9303).